We begin with the raw amino-acid sequence, 147 residues long: Large ribosomal subunit protein bL9 (147 aa).

This sequence belongs to the bacterial ribosomal protein bL9 family.

Binds to the 23S rRNA. The sequence is that of Large ribosomal subunit protein bL9 from Clostridium botulinum (strain ATCC 19397 / Type A).